Reading from the N-terminus, the 540-residue chain is Probable protein kinase UbiB (540 aa).

The chain crosses the membrane as a helical span at residues 24 to 44; the sequence is LLFDQPLLPWWLASLRLLMPW. Residues 126 to 494 enclose the Protein kinase domain; it reads RFDVEPLASA…RRRQGDRWAL (369 aa). Residues 132–140 and K154 contribute to the ATP site; that span reads LASASVAQV. Catalysis depends on D289, which acts as the Proton acceptor. A run of 2 helical transmembrane segments spans residues 496–516 and 518–538; these read LLGA…AETA and LAAP…YLIV.

This sequence belongs to the ABC1 family. UbiB subfamily.

Its subcellular location is the cell inner membrane. The protein operates within cofactor biosynthesis; ubiquinone biosynthesis [regulation]. Functionally, is probably a protein kinase regulator of UbiI activity which is involved in aerobic coenzyme Q (ubiquinone) biosynthesis. The polypeptide is Probable protein kinase UbiB (Pseudomonas putida (strain ATCC 700007 / DSM 6899 / JCM 31910 / BCRC 17059 / LMG 24140 / F1)).